The primary structure comprises 218 residues: Adenylate kinase (218 aa).

Glycine 10 to threonine 15 contacts ATP. Residues serine 30–valine 59 form an NMP region. Residues threonine 31, arginine 36, glycine 57 to valine 59, glycine 85 to arginine 88, and glutamine 92 contribute to the AMP site. The tract at residues glycine 122–aspartate 159 is LID. Residues arginine 123 and threonine 132–tyrosine 133 each bind ATP. Residues arginine 156 and arginine 167 each coordinate AMP. An ATP-binding site is contributed by glycine 203.

This sequence belongs to the adenylate kinase family. In terms of assembly, monomer.

It localises to the cytoplasm. It carries out the reaction AMP + ATP = 2 ADP. It functions in the pathway purine metabolism; AMP biosynthesis via salvage pathway; AMP from ADP: step 1/1. Functionally, catalyzes the reversible transfer of the terminal phosphate group between ATP and AMP. Plays an important role in cellular energy homeostasis and in adenine nucleotide metabolism. The protein is Adenylate kinase of Herminiimonas arsenicoxydans.